The following is a 242-amino-acid chain: Protein MHF1 homolog (242 aa).

The disordered stretch occupies residues 208 to 242; the sequence is LKAKEPQSERKRKKGSAKKEDKASSSNAVRITTDL. Positions 231 to 242 are enriched in polar residues; it reads SSSNAVRITTDL.

This sequence belongs to the TAF9 family. CENP-S/MHF1 subfamily.

It is found in the nucleus. In terms of biological role, involved in the promotion of spontaneous somatic homologous recombination (HR) events, which is opposite to the function of FANCM in ordered HR. Only FANCM is essential for replicative repair in the absence of the endonuclease MUS81. Acts in the same pathway as FANCM to restrain class II meiotic crossing over (CO), and acts with FANCM during meiosis to repair interstrand cross-links (ICLs). This common pathway between MHF1 and FANCM is in parallel to the pathway that involves the RECQ4A helicase. The polypeptide is Protein MHF1 homolog (Arabidopsis thaliana (Mouse-ear cress)).